The following is a 274-amino-acid chain: Large ribosomal subunit protein uL2cz/uL2cy (274 aa).

2 disordered regions span residues Met1 to Val22 and Asn224 to Lys274.

This sequence belongs to the universal ribosomal protein uL2 family. Part of the 50S ribosomal subunit.

The protein resides in the plastid. The protein localises to the chloroplast. The protein is Large ribosomal subunit protein uL2cz/uL2cy (rpl2-A) of Helianthus annuus (Common sunflower).